The sequence spans 725 residues: IML2-like protein SCY_3392 (725 aa).

Thr-196 is subject to Phosphothreonine. Ser-246, Ser-377, and Ser-380 each carry phosphoserine.

The protein belongs to the IML2 family.

The protein localises to the cytoplasm. It is found in the nucleus. Its function is as follows. May be involved in mitochondrial DNA stability. The polypeptide is IML2-like protein SCY_3392 (Saccharomyces cerevisiae (strain YJM789) (Baker's yeast)).